Consider the following 292-residue polypeptide: MNFFEGTVLGLVQGLTEFLPVSSSAHLRIAAALAGWEDPGAAFTAVTQIGTETAVLIYFRRDIARIVAAWARSLTRREMRKDPDARTGWLVILGTLPIGLLGVTLQDAIEGPFRDLRLIATTLIVLGLILGGADWYASKGRPQGRHSPLRPRKVLEDLSVRDGLLYGLAQSAALIPGVSRSGATISGGLLLGYTREAAARYSFLLAMPAVLASGVFELRSIGGKDADVAWGPTILATFVAFVTGYAAIAWFLRYISTRSFAPFVLYRVGLGLLLFSLLVGGALSPDAGAPPG.

5 consecutive transmembrane segments (helical) span residues 89–109 (WLVI…QDAI), 118–138 (LIAT…WYAS), 203–223 (FLLA…SIGG), 232–252 (PTIL…AWFL), and 263–283 (FVLY…GGAL).

The protein belongs to the UppP family.

The protein resides in the cell membrane. It carries out the reaction di-trans,octa-cis-undecaprenyl diphosphate + H2O = di-trans,octa-cis-undecaprenyl phosphate + phosphate + H(+). Catalyzes the dephosphorylation of undecaprenyl diphosphate (UPP). Confers resistance to bacitracin. The protein is Undecaprenyl-diphosphatase 2 of Frankia casuarinae (strain DSM 45818 / CECT 9043 / HFP020203 / CcI3).